We begin with the raw amino-acid sequence, 170 residues long: E1B protein, small T-antigen (170 aa).

Residues 137-170 (PAQPPHGLDPVREEEEEEEEEENLRAGLDPQTEL) form a disordered region. The span at 148–158 (REEEEEEEEEE) shows a compositional bias: acidic residues.

It belongs to the adenoviridae E1B 19 kDa protein family.

The protein localises to the host cell membrane. It localises to the host nucleus envelope. It is found in the host nucleus lamina. In terms of biological role, putative adenovirus Bcl-2 homolog that inhibits apoptosis induced by TNF or FAS pathways, as well as p53-mediated apoptosis. Without E1B 19K function, virus production is compromised because of premature death of host cell. Interacts with Bax protein in cell lysates. In Homo sapiens (Human), this protein is E1B protein, small T-antigen.